The sequence spans 308 residues: Hydroxyacylglutathione hydrolase, mitochondrial (308 aa).

A mitochondrion-targeting transit peptide spans 1–13 (MVLGRGLLGRRSL). H102, H104, D106, and H107 together coordinate Zn(2+). An N6-acetyllysine modification is found at K116. Zn(2+) is bound by residues H158 and D182. Substrate is bound by residues 191 to 193 (KFY) and 221 to 223 (HEY). A Zn(2+)-binding site is contributed by H221. The residue at position 229 (K229) is an N6-acetyllysine; alternate. K229 carries the N6-succinyllysine; alternate modification. Substrate is bound at residue 297–300 (RKEK).

It belongs to the metallo-beta-lactamase superfamily. Glyoxalase II family. Monomer. Zn(2+) serves as cofactor. In terms of tissue distribution, testis.

It localises to the mitochondrion matrix. The protein localises to the cytoplasm. The enzyme catalyses an S-(2-hydroxyacyl)glutathione + H2O = a 2-hydroxy carboxylate + glutathione + H(+). It catalyses the reaction (R)-S-lactoylglutathione + H2O = (R)-lactate + glutathione + H(+). The protein operates within secondary metabolite metabolism; methylglyoxal degradation; (R)-lactate from methylglyoxal: step 2/2. Its function is as follows. Thiolesterase that catalyzes the hydrolysis of S-D-lactoyl-glutathione to form glutathione and D-lactic acid. The polypeptide is Hydroxyacylglutathione hydrolase, mitochondrial (HAGH) (Macaca fascicularis (Crab-eating macaque)).